We begin with the raw amino-acid sequence, 414 residues long: Multifunctional CCA protein (414 aa).

Residues G8 and R11 each contribute to the ATP site. 2 residues coordinate CTP: G8 and R11. Positions 21 and 23 each coordinate Mg(2+). The ATP site is built by R91, R137, and R140. Residues R91, R137, and R140 each coordinate CTP. Residues 226–327 (TGVHVMMVVD…VTLFERCDAF (102 aa)) enclose the HD domain.

Belongs to the tRNA nucleotidyltransferase/poly(A) polymerase family. Bacterial CCA-adding enzyme type 1 subfamily. As to quaternary structure, monomer. Can also form homodimers and oligomers. The cofactor is Mg(2+). Ni(2+) is required as a cofactor.

It carries out the reaction a tRNA precursor + 2 CTP + ATP = a tRNA with a 3' CCA end + 3 diphosphate. The enzyme catalyses a tRNA with a 3' CCA end + 2 CTP + ATP = a tRNA with a 3' CCACCA end + 3 diphosphate. Its function is as follows. Catalyzes the addition and repair of the essential 3'-terminal CCA sequence in tRNAs without using a nucleic acid template. Adds these three nucleotides in the order of C, C, and A to the tRNA nucleotide-73, using CTP and ATP as substrates and producing inorganic pyrophosphate. tRNA 3'-terminal CCA addition is required both for tRNA processing and repair. Also involved in tRNA surveillance by mediating tandem CCA addition to generate a CCACCA at the 3' terminus of unstable tRNAs. While stable tRNAs receive only 3'-terminal CCA, unstable tRNAs are marked with CCACCA and rapidly degraded. The polypeptide is Multifunctional CCA protein (Herminiimonas arsenicoxydans).